Here is a 212-residue protein sequence, read N- to C-terminus: Interleukin-6 (212 aa).

A signal peptide spans 1-29 (MNSFSTSAFGPVAFSLGLLLVLPAAFPAP). 2 disulfide bridges follow: Cys-72–Cys-78 and Cys-101–Cys-111. Asn-73 carries N-linked (GlcNAc...) asparagine glycosylation. The N-linked (GlcNAc...) asparagine glycan is linked to Asn-172.

It belongs to the IL-6 superfamily. In terms of assembly, component of a hexamer of two molecules each of IL6, IL6R and IL6ST; first binds to IL6R to associate with the signaling subunit IL6ST. Interacts with IL6R (via the N-terminal ectodomain); this interaction may be affected by IL6R-binding with SORL1, hence decreasing IL6 cis signaling. Interacts with SORL1 (via the N-terminal ectodomain); this interaction leads to IL6 internalization and lysosomal degradation. May form a trimeric complex with the soluble SORL1 ectodomain and soluble IL6R receptor; this interaction might stabilize circulating IL6, hence promoting IL6 trans signaling.

It is found in the secreted. In terms of biological role, cytokine with a wide variety of biological functions in immunity, tissue regeneration, and metabolism. Binds to IL6R, then the complex associates to the signaling subunit IL6ST/gp130 to trigger the intracellular IL6-signaling pathway. The interaction with the membrane-bound IL6R and IL6ST stimulates 'classic signaling', whereas the binding of IL6 and soluble IL6R to IL6ST stimulates 'trans-signaling'. Alternatively, 'cluster signaling' occurs when membrane-bound IL6:IL6R complexes on transmitter cells activate IL6ST receptors on neighboring receiver cells. IL6 is a potent inducer of the acute phase response. Rapid production of IL6 contributes to host defense during infection and tissue injury, but excessive IL6 synthesis is involved in disease pathology. In the innate immune response, is synthesized by myeloid cells, such as macrophages and dendritic cells, upon recognition of pathogens through toll-like receptors (TLRs) at the site of infection or tissue injury. In the adaptive immune response, is required for the differentiation of B cells into immunoglobulin-secreting cells. Plays a major role in the differentiation of CD4(+) T cell subsets. Essential factor for the development of T follicular helper (Tfh) cells that are required for the induction of germinal-center formation. Required to drive naive CD4(+) T cells to the Th17 lineage. Also required for proliferation of myeloma cells and the survival of plasmablast cells. Functionally, acts as an essential factor in bone homeostasis and on vessels directly or indirectly by induction of VEGF, resulting in increased angiogenesis activity and vascular permeability. Induces, through 'trans-signaling' and synergistically with IL1B and TNF, the production of VEGF. Involved in metabolic controls, is discharged into the bloodstream after muscle contraction increasing lipolysis and improving insulin resistance. 'Trans-signaling' in central nervous system also regulates energy and glucose homeostasis. Mediates, through GLP-1, crosstalk between insulin-sensitive tissues, intestinal L cells and pancreatic islets to adapt to changes in insulin demand. Also acts as a myokine. Plays a protective role during liver injury, being required for maintenance of tissue regeneration. Also has a pivotal role in iron metabolism by regulating HAMP/hepcidin expression upon inflammation or bacterial infection. Through activation of IL6ST-YAP-NOTCH pathway, induces inflammation-induced epithelial regeneration. In Cercocebus atys (Sooty mangabey), this protein is Interleukin-6 (IL6).